Here is a 63-residue protein sequence, read N- to C-terminus: Large ribosomal subunit protein bL28 (63 aa).

Belongs to the bacterial ribosomal protein bL28 family.

The chain is Large ribosomal subunit protein bL28 from Kosmotoga olearia (strain ATCC BAA-1733 / DSM 21960 / TBF 19.5.1).